The chain runs to 258 residues: MLAKRIIPCLDVRDGQVVKGVQFRNHEIIGDIVPLAKRYAEEGADELVFYDITASSDGRVVDKSWVSRVAEVIDIPFCVAGGIKSLEDAAKILSFGADKISINSPALADPTLITRLADRFGVQCIVVGIDTWYDAETGKYHVNQYTGDESRTRVTQWETLDWVQEVQKRGAGEIVLNMMNQDGVRNGYDLEQLKKVREVCHVPLIASGGAGTMEHFLEAFRDADVDGALAASVFHKQIINISELKTYLATQGVEIRIC.

Residues D11 and D130 contribute to the active site.

The protein belongs to the HisA/HisF family. As to quaternary structure, heterodimer of HisH and HisF.

It is found in the cytoplasm. The enzyme catalyses 5-[(5-phospho-1-deoxy-D-ribulos-1-ylimino)methylamino]-1-(5-phospho-beta-D-ribosyl)imidazole-4-carboxamide + L-glutamine = D-erythro-1-(imidazol-4-yl)glycerol 3-phosphate + 5-amino-1-(5-phospho-beta-D-ribosyl)imidazole-4-carboxamide + L-glutamate + H(+). It functions in the pathway amino-acid biosynthesis; L-histidine biosynthesis; L-histidine from 5-phospho-alpha-D-ribose 1-diphosphate: step 5/9. IGPS catalyzes the conversion of PRFAR and glutamine to IGP, AICAR and glutamate. The HisF subunit catalyzes the cyclization activity that produces IGP and AICAR from PRFAR using the ammonia provided by the HisH subunit. This is Imidazole glycerol phosphate synthase subunit HisF from Escherichia coli O7:K1 (strain IAI39 / ExPEC).